Here is a 166-residue protein sequence, read N- to C-terminus: MNPSPRKRVALFTDGACLGNPGPGGWAALLRFHAHEKLLSGGEACTTNNRMELKAAIEGLKALKEPCEVDLYTDSHYLKKAFTEGWLEGWRKRGWRTAEGKPVKNRDLWEALLLAMAPHRVRFHFVKGHTGHPENERVDREARRQAQSQAKTPCPPRAPTLFHEEA.

The region spanning 5–147 (PRKRVALFTD…VDREARRQAQ (143 aa)) is the RNase H type-1 domain. 4 residues coordinate Mg(2+): aspartate 14, glutamate 52, aspartate 74, and aspartate 139. The tract at residues 128-166 (GHTGHPENERVDREARRQAQSQAKTPCPPRAPTLFHEEA) is disordered. Residues 131 to 144 (GHPENERVDREARR) show a composition bias toward basic and acidic residues.

Belongs to the RNase H family. In terms of assembly, monomer. It depends on Mg(2+) as a cofactor.

It carries out the reaction Endonucleolytic cleavage to 5'-phosphomonoester.. Its function is as follows. Endonuclease that specifically degrades the RNA of RNA-DNA hybrids. The protein is Ribonuclease H (rnhA) of Thermus thermophilus (strain ATCC 27634 / DSM 579 / HB8).